A 255-amino-acid chain; its full sequence is Small ribosomal subunit protein uS2 (255 aa).

This sequence belongs to the universal ribosomal protein uS2 family.

The polypeptide is Small ribosomal subunit protein uS2 (Streptococcus thermophilus (strain ATCC BAA-491 / LMD-9)).